Here is a 160-residue protein sequence, read N- to C-terminus: Ribosome-binding factor A (160 aa).

Positions 112–122 are enriched in basic and acidic residues; it reads KARQSDEKVRE. Residues 112 to 160 form a disordered region; that stretch reads KARQSDEKVREASAGATYAGEADPYRKPDEDETDTEGAVEADETDDTAK. Positions 141-160 are enriched in acidic residues; the sequence is EDETDTEGAVEADETDDTAK.

This sequence belongs to the RbfA family. As to quaternary structure, monomer. Binds 30S ribosomal subunits, but not 50S ribosomal subunits or 70S ribosomes.

It localises to the cytoplasm. Functionally, one of several proteins that assist in the late maturation steps of the functional core of the 30S ribosomal subunit. Associates with free 30S ribosomal subunits (but not with 30S subunits that are part of 70S ribosomes or polysomes). Required for efficient processing of 16S rRNA. May interact with the 5'-terminal helix region of 16S rRNA. The polypeptide is Ribosome-binding factor A (Streptomyces coelicolor (strain ATCC BAA-471 / A3(2) / M145)).